Consider the following 64-residue polypeptide: Copper-specific metallothionein-2 (64 aa).

Residues cysteine 3, cysteine 5, cysteine 9, cysteine 11, cysteine 16, cysteine 18, cysteine 22, cysteine 24, cysteine 27, cysteine 33, cysteine 40, cysteine 44, cysteine 50, cysteine 52, cysteine 56, and cysteine 58 each coordinate Cu(+).

It belongs to the metallothionein superfamily. Type 2 family.

Its function is as follows. The metallothioneins are involved in the cellular sequestration of toxic metal ions and regulation of essential trace elements. This isoform binds exclusively copper. This Callinectes sapidus (Blue crab) protein is Copper-specific metallothionein-2.